The sequence spans 296 residues: Ribosomal protein L11 methyltransferase (296 aa).

S-adenosyl-L-methionine contacts are provided by Thr-146, Gly-167, Asp-189, and Asn-231.

Belongs to the methyltransferase superfamily. PrmA family.

The protein localises to the cytoplasm. It carries out the reaction L-lysyl-[protein] + 3 S-adenosyl-L-methionine = N(6),N(6),N(6)-trimethyl-L-lysyl-[protein] + 3 S-adenosyl-L-homocysteine + 3 H(+). Functionally, methylates ribosomal protein L11. In Haemophilus influenzae (strain ATCC 51907 / DSM 11121 / KW20 / Rd), this protein is Ribosomal protein L11 methyltransferase.